The following is a 20-amino-acid chain: Fibrinogen beta chain (20 aa).

Y5 is subject to Sulfotyrosine.

As to quaternary structure, heterohexamer; disulfide linked. Contains 2 sets of 3 non-identical chains (alpha, beta and gamma). The 2 heterotrimers are in head to head conformation with the N-termini in a small central domain. Conversion of fibrinogen to fibrin is triggered by thrombin, which cleaves fibrinopeptides A and B from alpha and beta chains, and thus exposes the N-terminal polymerization sites responsible for the formation of the soft clot.

It localises to the secreted. Its function is as follows. Cleaved by the protease thrombin to yield monomers which, together with fibrinogen alpha (FGA) and fibrinogen gamma (FGG), polymerize to form an insoluble fibrin matrix. Fibrin has a major function in hemostasis as one of the primary components of blood clots. In addition, functions during the early stages of wound repair to stabilize the lesion and guide cell migration during re-epithelialization. Was originally thought to be essential for platelet aggregation, based on in vitro studies using anticoagulated blood. However subsequent studies have shown that it is not absolutely required for thrombus formation in vivo. Enhances expression of SELP in activated platelets. Maternal fibrinogen is essential for successful pregnancy. Fibrin deposition is also associated with infection, where it protects against IFNG-mediated hemorrhage. May also facilitate the antibacterial immune response via both innate and T-cell mediated pathways. This chain is Fibrinogen beta chain (FGB), found in Capra hircus (Goat).